The primary structure comprises 170 residues: Shikimate kinase (170 aa).

15 to 20 (GAGKTT) provides a ligand contact to ATP. T19 is a Mg(2+) binding site. Positions 37, 61, and 83 each coordinate substrate. R121 is an ATP binding site. R140 serves as a coordination point for substrate.

The protein belongs to the shikimate kinase family. As to quaternary structure, monomer. It depends on Mg(2+) as a cofactor.

Its subcellular location is the cytoplasm. The enzyme catalyses shikimate + ATP = 3-phosphoshikimate + ADP + H(+). Its pathway is metabolic intermediate biosynthesis; chorismate biosynthesis; chorismate from D-erythrose 4-phosphate and phosphoenolpyruvate: step 5/7. Functionally, catalyzes the specific phosphorylation of the 3-hydroxyl group of shikimic acid using ATP as a cosubstrate. In Neisseria meningitidis serogroup C (strain 053442), this protein is Shikimate kinase.